Here is a 330-residue protein sequence, read N- to C-terminus: Ig gamma-2A chain C region, A allele (330 aa).

Ig-like domains follow at residues 6–98 (PSVY…KKIE), 121–220 (PSVF…RTIS), and 229–325 (PQVY…KSFS). Intrachain disulfides connect C27-C82, C144-C204, and C250-C308. Residue N180 is glycosylated (N-linked (GlcNAc...) asparagine).

This chain is Ig gamma-2A chain C region, A allele (Ighg), found in Mus musculus (Mouse).